Consider the following 257-residue polypeptide: BTB/POZ domain-containing protein KCTD1 (257 aa).

Positions 1 to 25 are disordered; the sequence is MSRPLITRSPASPLNNQGIPTPAQL. Residues serine 9 and serine 12 each carry the phosphoserine modification. A compositionally biased stretch (polar residues) spans 9–25; it reads SPASPLNNQGIPTPAQL. The region spanning 30–100 is the BTB domain; sequence APVHIDVGGH…LRTSKLLIPD (71 aa).

As to quaternary structure, forms homopentamers. Interacts with KCTD15, probably forming heteropentamers depending on its abundance in a cell-type dependent manner. Interacts with TFAP2A, TFAP2B and TFAP2C via the BTB domain. In terms of processing, sumoylated.

The protein resides in the nucleus. Functionally, may repress the transcriptional activity of AP-2 family members, including TFAP2A, TFAP2B and TFAP2C to various extent. This chain is BTB/POZ domain-containing protein KCTD1 (KCTD1), found in Bos taurus (Bovine).